The following is a 711-amino-acid chain: Polyribonucleotide nucleotidyltransferase (711 aa).

Asp-489 and Asp-495 together coordinate Mg(2+). The KH domain maps to 556-615 (PRIHTIKISPDKIKDVIGKGGSVIRALTEETGTTIEIEDDGTVKIAATDGEKAKHAIRRI). Residues 625 to 693 (GRIYNGKVTR…RQGRVRLSIK (69 aa)) form the S1 motif domain.

Belongs to the polyribonucleotide nucleotidyltransferase family. In terms of assembly, component of the RNA degradosome, which is a multiprotein complex involved in RNA processing and mRNA degradation. Mg(2+) is required as a cofactor.

It is found in the cytoplasm. It carries out the reaction RNA(n+1) + phosphate = RNA(n) + a ribonucleoside 5'-diphosphate. In terms of biological role, involved in mRNA degradation. Catalyzes the phosphorolysis of single-stranded polyribonucleotides processively in the 3'- to 5'-direction. The protein is Polyribonucleotide nucleotidyltransferase of Cronobacter sakazakii (strain ATCC BAA-894) (Enterobacter sakazakii).